The following is a 418-amino-acid chain: Staphyloferrin B transporter (418 aa).

Helical transmembrane passes span 19 to 39 (FIAIAGLTVLVPLLPIYMASL), 49 to 69 (LWSGIAIAAPAVTTMIASPIW), 88 to 108 (GLAVCLFLMALCTTPLQFVLV), 163 to 183 (ILGFSALLMSIAVITFIVCIF), 222 to 242 (FIIVGVLANFAMYGMLTALSP), 257 to 277 (VIGFLQSAFWTASILSAPLWG), 287 to 307 (SVYIFATIACGCSAILQGLAT), 317 to 337 (ILQGLTYSALIQSVMFVVVNA), 353 to 373 (MLVVGQIIGSLSGAAITSYTT), and 377 to 397 (TFIVMGVVFAVSSLFLICSTI).

It belongs to the major facilitator superfamily.

The protein resides in the cell membrane. In terms of biological role, involved in staphyloferrin B secretion. The sequence is that of Staphyloferrin B transporter from Staphylococcus aureus (strain NCTC 8325 / PS 47).